Here is a 383-residue protein sequence, read N- to C-terminus: Non-structural maintenance of chromosomes element 4 homolog B (383 aa).

Positions 1-22 are enriched in basic and acidic residues; it reads MRNSVKWETELTGDRSRRREAD. Disordered regions lie at residues 1–59, 198–231, and 355–383; these read MRNS…EQGI, MKQR…EKKS, and QGSV…NGGL. The segment covering 201–212 has biased composition (basic residues); it reads RKSRVGNRKRTK. Residues 355–372 show a composition bias toward polar residues; sequence QGSVIQEETVVEDSSNME.

It belongs to the NSE4 family. In terms of assembly, interacts with SMC5, SMC6A or SMC6B. The SMC5-SMC6 complex is composed of the SMC5 and SMC6 heterodimer attached via their hinge domain and from the non-SMC subunit NSE4A or NSE4B. In terms of tissue distribution, not expressed in seedlings, rosette leaves and floral buds.

It localises to the nucleus. Functionally, component of the SMC5-SMC6 complex, that promotes sister chromatid alignment after DNA damage and facilitates double-stranded DNA breaks (DSBs) repair via homologous recombination between sister chromatids. This is Non-structural maintenance of chromosomes element 4 homolog B (NSE4B) from Arabidopsis thaliana (Mouse-ear cress).